Consider the following 256-residue polypeptide: Imidazole glycerol phosphate synthase subunit HisF (256 aa).

Catalysis depends on residues aspartate 11 and aspartate 130.

Belongs to the HisA/HisF family. Heterodimer of HisH and HisF.

The protein resides in the cytoplasm. It catalyses the reaction 5-[(5-phospho-1-deoxy-D-ribulos-1-ylimino)methylamino]-1-(5-phospho-beta-D-ribosyl)imidazole-4-carboxamide + L-glutamine = D-erythro-1-(imidazol-4-yl)glycerol 3-phosphate + 5-amino-1-(5-phospho-beta-D-ribosyl)imidazole-4-carboxamide + L-glutamate + H(+). Its pathway is amino-acid biosynthesis; L-histidine biosynthesis; L-histidine from 5-phospho-alpha-D-ribose 1-diphosphate: step 5/9. In terms of biological role, IGPS catalyzes the conversion of PRFAR and glutamine to IGP, AICAR and glutamate. The HisF subunit catalyzes the cyclization activity that produces IGP and AICAR from PRFAR using the ammonia provided by the HisH subunit. This is Imidazole glycerol phosphate synthase subunit HisF from Thioalkalivibrio sulfidiphilus (strain HL-EbGR7).